The primary structure comprises 125 residues: Cardioactive peptide (125 aa).

The signal sequence occupies residues 1–22 (MTVSRVCLLLLVALVYLDCCYA). Residues 23 to 42 (ASIPRNFDPRLSEEIVMAPK) constitute a propeptide that is removed on maturation. C47 and C53 are joined by a disulfide. A Cysteine amide modification is found at C53. Residues 57–125 (RSQGPPGMPA…RRKQKEAYIQ (69 aa)) constitute a propeptide that is removed on maturation.

As to expression, abdominal perivisceral organ; major neurohemal release site. Expressed in 116 neurons in post-embryonic central nervous system. Nine pairs of cells are observed in the brain, 4.5 pairs in the subesophageal ganglion, three pairs in each thoracic ganglion (T1-T3), three pairs in the first abdominal ganglion (A1), five pairs each in the second to sixth abdominal ganglia (A2-A6) and 7.5 pairs in the terminal ganglion. Expressed in every ganglion in each post-embryonic stage, except in the thoracic ganglia of first- and second-instar larvae. Colocalizes with CAP2b in median neurosecretory cells during the last larval instar through to adults.

The protein resides in the secreted. Functionally, cardioregulatory neurohormone that increases heart beat rate during adult wing inflation; has no effect on beat amplitude. The effect of CCAP is both ino- and chronotropic. The chain is Cardioactive peptide from Manduca sexta (Tobacco hawkmoth).